The primary structure comprises 463 residues: tRNA-2-methylthio-N(6)-dimethylallyladenosine synthase (463 aa).

The 117-residue stretch at 19-135 folds into the MTTase N-terminal domain; it reads GSYWITTFGC…LESLLNQVDS (117 aa). Residues Cys28, Cys64, Cys98, Cys170, Cys174, and Cys177 each coordinate [4Fe-4S] cluster. One can recognise a Radical SAM core domain in the interval 156–393; sequence RDSSICGWVN…NSLVENIAKE (238 aa). The region spanning 396-463 is the TRAM domain; it reads QRYKNTSQEI…RPFSLTAKLL (68 aa).

It belongs to the methylthiotransferase family. MiaB subfamily. In terms of assembly, monomer. [4Fe-4S] cluster is required as a cofactor.

Its subcellular location is the cytoplasm. It catalyses the reaction N(6)-dimethylallyladenosine(37) in tRNA + (sulfur carrier)-SH + AH2 + 2 S-adenosyl-L-methionine = 2-methylsulfanyl-N(6)-dimethylallyladenosine(37) in tRNA + (sulfur carrier)-H + 5'-deoxyadenosine + L-methionine + A + S-adenosyl-L-homocysteine + 2 H(+). Catalyzes the methylthiolation of N6-(dimethylallyl)adenosine (i(6)A), leading to the formation of 2-methylthio-N6-(dimethylallyl)adenosine (ms(2)i(6)A) at position 37 in tRNAs that read codons beginning with uridine. The protein is tRNA-2-methylthio-N(6)-dimethylallyladenosine synthase of Prochlorococcus marinus (strain NATL2A).